The primary structure comprises 427 residues: Enolase (427 aa).

Residue Q163 coordinates (2R)-2-phosphoglycerate. E205 acts as the Proton donor in catalysis. Mg(2+) is bound by residues D242, E285, and D312. The (2R)-2-phosphoglycerate site is built by K337, R366, S367, and K388. K337 serves as the catalytic Proton acceptor.

The protein belongs to the enolase family. Requires Mg(2+) as cofactor.

Its subcellular location is the cytoplasm. The protein resides in the secreted. It is found in the cell surface. The catalysed reaction is (2R)-2-phosphoglycerate = phosphoenolpyruvate + H2O. Its pathway is carbohydrate degradation; glycolysis; pyruvate from D-glyceraldehyde 3-phosphate: step 4/5. Its function is as follows. Catalyzes the reversible conversion of 2-phosphoglycerate (2-PG) into phosphoenolpyruvate (PEP). It is essential for the degradation of carbohydrates via glycolysis. The polypeptide is Enolase (Methylocella silvestris (strain DSM 15510 / CIP 108128 / LMG 27833 / NCIMB 13906 / BL2)).